The sequence spans 249 residues: Imidazole glycerol phosphate synthase subunit HisF (249 aa).

Catalysis depends on residues Asp-11 and Asp-130.

The protein belongs to the HisA/HisF family. As to quaternary structure, heterodimer of HisH and HisF.

The protein localises to the cytoplasm. It catalyses the reaction 5-[(5-phospho-1-deoxy-D-ribulos-1-ylimino)methylamino]-1-(5-phospho-beta-D-ribosyl)imidazole-4-carboxamide + L-glutamine = D-erythro-1-(imidazol-4-yl)glycerol 3-phosphate + 5-amino-1-(5-phospho-beta-D-ribosyl)imidazole-4-carboxamide + L-glutamate + H(+). It functions in the pathway amino-acid biosynthesis; L-histidine biosynthesis; L-histidine from 5-phospho-alpha-D-ribose 1-diphosphate: step 5/9. In terms of biological role, IGPS catalyzes the conversion of PRFAR and glutamine to IGP, AICAR and glutamate. The HisF subunit catalyzes the cyclization activity that produces IGP and AICAR from PRFAR using the ammonia provided by the HisH subunit. The polypeptide is Imidazole glycerol phosphate synthase subunit HisF (Sulfolobus acidocaldarius (strain ATCC 33909 / DSM 639 / JCM 8929 / NBRC 15157 / NCIMB 11770)).